Consider the following 287-residue polypeptide: Undecaprenyl-diphosphatase (287 aa).

8 helical membrane-spanning segments follow: residues 1-21 (MALWIAVLLGVVQGIFMFLPV), 49-69 (MILFNLVVHVGTLVSIVVVFA), 101-121 (LFLLGMLSVLFTGVVGLTLKA), 126-146 (VFANPWMIAFTLILTGALLFW), 160-180 (TGVGTATLIGVAQGFALMPGL), 203-223 (YSFFLAIPTICAATLLQAIEV), 232-252 (VSVAALITGFVVAAGVGIVSL), and 267-287 (FSFYVWALAAAILLGWIDLPI).

The protein belongs to the UppP family.

The protein localises to the cell inner membrane. It carries out the reaction di-trans,octa-cis-undecaprenyl diphosphate + H2O = di-trans,octa-cis-undecaprenyl phosphate + phosphate + H(+). Functionally, catalyzes the dephosphorylation of undecaprenyl diphosphate (UPP). Confers resistance to bacitracin. The chain is Undecaprenyl-diphosphatase from Halorhodospira halophila (strain DSM 244 / SL1) (Ectothiorhodospira halophila (strain DSM 244 / SL1)).